A 414-amino-acid chain; its full sequence is Putative truncated GMC-type inactive oxidoreductase R832 (414 aa).

Residues 1–20 (MNPTKLFLVFVAFAFAIINA) form the signal peptide. 38–67 (DYIIVGSGPGGSRAVQQCIAKGHKCTLVER) serves as a coordination point for FAD.

It belongs to the GMC oxidoreductase family. FAD serves as cofactor.

In Acanthamoeba polyphaga (Amoeba), this protein is Putative truncated GMC-type inactive oxidoreductase R832.